We begin with the raw amino-acid sequence, 148 residues long: Sperm-specific protein PHI-2B (148 aa).

Residues 1–35 (PSPSRRSRSRSRSRSKSPKRSPAKKARKTPKKRRA) are compositionally biased toward basic residues. Disordered stretches follow at residues 1-44 (PSPS…KPST) and 97-148 (GVLV…KSNN). The H15 domain maps to 40-119 (KKPSTLSMIV…GATGSFRVGK (80 aa)). Over residues 124 to 148 (PKKKAKKAKSPKKKSSKKSSNKSNN) the composition is skewed to basic residues.

This sequence belongs to the histone H1/H5 family. Sperm.

Its subcellular location is the nucleus. It localises to the chromosome. Functionally, linker histones are implicated in chromatin remodeling and/or transcriptional regulation during spermiogenesis, the process of spermatid maturation into spermatozoa. This is Sperm-specific protein PHI-2B from Mytilus californianus (California mussel).